Consider the following 486-residue polypeptide: Histidine--tRNA ligase, chloroplastic/mitochondrial (486 aa).

Belongs to the class-II aminoacyl-tRNA synthetase family.

It localises to the plastid. The protein resides in the chloroplast. Its subcellular location is the mitochondrion. The enzyme catalyses tRNA(His) + L-histidine + ATP = L-histidyl-tRNA(His) + AMP + diphosphate + H(+). The chain is Histidine--tRNA ligase, chloroplastic/mitochondrial from Arabidopsis thaliana (Mouse-ear cress).